We begin with the raw amino-acid sequence, 644 residues long: Exoribonuclease 2 (644 aa).

An RNB domain is found at 189 to 516 (RQDLTALNFV…NHRLLKAVIK (328 aa)). One can recognise an S1 motif domain in the interval 561-643 (NTRFAAEIID…ETRSIIARPA (83 aa)).

Belongs to the RNR ribonuclease family. RNase II subfamily.

The protein resides in the cytoplasm. The enzyme catalyses Exonucleolytic cleavage in the 3'- to 5'-direction to yield nucleoside 5'-phosphates.. In terms of biological role, involved in mRNA degradation. Hydrolyzes single-stranded polyribonucleotides processively in the 3' to 5' direction. The sequence is that of Exoribonuclease 2 from Salmonella enteritidis PT4 (strain P125109).